Consider the following 303-residue polypeptide: Protoheme IX farnesyltransferase (303 aa).

The next 9 helical transmembrane spans lie at 25 to 45 (MGLV…AVVM), 54 to 74 (IPQI…ACAL), 104 to 124 (LLLL…LLNI), 125 to 145 (PSGV…SIWS), 151 to 171 (WNTV…WVAI), 179 to 199 (AIAL…ALAI), 227 to 247 (FIWL…GVVF), 248 to 268 (VVLA…TFKK), and 280 to 300 (FIYS…VSLL).

Belongs to the UbiA prenyltransferase family. Protoheme IX farnesyltransferase subfamily. As to quaternary structure, interacts with CtaA.

The protein resides in the cell membrane. The catalysed reaction is heme b + (2E,6E)-farnesyl diphosphate + H2O = Fe(II)-heme o + diphosphate. The protein operates within porphyrin-containing compound metabolism; heme O biosynthesis; heme O from protoheme: step 1/1. Functionally, converts heme B (protoheme IX) to heme O by substitution of the vinyl group on carbon 2 of heme B porphyrin ring with a hydroxyethyl farnesyl side group. This chain is Protoheme IX farnesyltransferase, found in Staphylococcus aureus (strain Mu3 / ATCC 700698).